Here is a 173-residue protein sequence, read N- to C-terminus: Large ribosomal subunit protein uL5 (173 aa).

It belongs to the universal ribosomal protein uL5 family. Part of the 50S ribosomal subunit; contacts the 5S rRNA and probably tRNA. Forms a bridge to the 30S subunit in the 70S ribosome.

This is one of the proteins that bind and probably mediate the attachment of the 5S RNA into the large ribosomal subunit, where it forms part of the central protuberance. In the 70S ribosome it contacts protein S13 of the 30S subunit (bridge B1b), connecting the 2 subunits; this bridge is implicated in subunit movement. May contact the P site tRNA; the 5S rRNA and some of its associated proteins might help stabilize positioning of ribosome-bound tRNAs. This Nitrosopumilus maritimus (strain SCM1) protein is Large ribosomal subunit protein uL5.